Reading from the N-terminus, the 258-residue chain is Tryptophan synthase alpha chain (258 aa).

Residues glutamate 47 and aspartate 58 each act as proton acceptor in the active site.

Belongs to the TrpA family. As to quaternary structure, tetramer of two alpha and two beta chains.

The catalysed reaction is (1S,2R)-1-C-(indol-3-yl)glycerol 3-phosphate + L-serine = D-glyceraldehyde 3-phosphate + L-tryptophan + H2O. It participates in amino-acid biosynthesis; L-tryptophan biosynthesis; L-tryptophan from chorismate: step 5/5. Its function is as follows. The alpha subunit is responsible for the aldol cleavage of indoleglycerol phosphate to indole and glyceraldehyde 3-phosphate. The sequence is that of Tryptophan synthase alpha chain from Bacillus thuringiensis subsp. konkukian (strain 97-27).